The chain runs to 210 residues: Thymidylate kinase (210 aa).

10-17 (GPEGAGKS) serves as a coordination point for ATP.

The protein belongs to the thymidylate kinase family.

The enzyme catalyses dTMP + ATP = dTDP + ADP. Functionally, phosphorylation of dTMP to form dTDP in both de novo and salvage pathways of dTTP synthesis. The protein is Thymidylate kinase of Pseudomonas fluorescens (strain Pf0-1).